Consider the following 179-residue polypeptide: Large ribosomal subunit protein uL5 (179 aa).

Belongs to the universal ribosomal protein uL5 family. As to quaternary structure, part of the 50S ribosomal subunit; part of the 5S rRNA/L5/L18/L25 subcomplex. Contacts the 5S rRNA and the P site tRNA. Forms a bridge to the 30S subunit in the 70S ribosome.

In terms of biological role, this is one of the proteins that bind and probably mediate the attachment of the 5S RNA into the large ribosomal subunit, where it forms part of the central protuberance. In the 70S ribosome it contacts protein S13 of the 30S subunit (bridge B1b), connecting the 2 subunits; this bridge is implicated in subunit movement. Contacts the P site tRNA; the 5S rRNA and some of its associated proteins might help stabilize positioning of ribosome-bound tRNAs. The sequence is that of Large ribosomal subunit protein uL5 from Marinomonas sp. (strain MWYL1).